The primary structure comprises 165 residues: Small ribosomal subunit protein uS5 (165 aa).

In terms of domain architecture, S5 DRBM spans 10 to 73 (LKEKVVFINR…EDAKKNLVEV (64 aa)).

The protein belongs to the universal ribosomal protein uS5 family. Part of the 30S ribosomal subunit. Contacts proteins S4 and S8.

Its function is as follows. With S4 and S12 plays an important role in translational accuracy. In terms of biological role, located at the back of the 30S subunit body where it stabilizes the conformation of the head with respect to the body. The protein is Small ribosomal subunit protein uS5 of Clostridium acetobutylicum (strain ATCC 824 / DSM 792 / JCM 1419 / IAM 19013 / LMG 5710 / NBRC 13948 / NRRL B-527 / VKM B-1787 / 2291 / W).